Here is a 160-residue protein sequence, read N- to C-terminus: Myosin regulatory light chain, smooth muscle (160 aa).

Blocked amino end (Ser) is present on S1. The residue at position 11 (S11) is a Phosphoserine. EF-hand domains lie at 20-55 (NQIQ…LGTA) and 88-123 (DPEE…MGDN). Ca(2+) contacts are provided by D33, N35, D37, and D44.

In molluscan muscle, calcium regulation is associated with myosin rather than with actin. Muscle myosin contains two types of light chains: the catalytic light chain, essential for ATPase activity, and the regulatory light chain, a calcium-binding protein responsible for Ca(2+) dependent binding and Ca(2+) dependent Mg-ATPase activity. The protein is Myosin regulatory light chain, smooth muscle of Spisula sachalinensis (Sakhalin surf-clam).